A 199-amino-acid chain; its full sequence is uncharacterized protein (199 aa).

Residues 1–48 (MSANEFYSSGQQGQYNQQNNQERTGAPNNGQYGADNGNPNGERGLFST) are disordered. The residue at position 2 (S2) is an N-acetylserine. Positions 7 to 21 (YSSGQQGQYNQQNNQ) are enriched in low complexity. Polar residues predominate over residues 22–31 (ERTGAPNNGQ). Phosphoserine is present on residues S53 and S70. The interval 89 to 199 (RKEHKQQEQY…RQGFNGGSRW (111 aa)) is disordered. Composition is skewed to gly residues over residues 124–163 (GGFG…GFGG), 170–179 (GGPGGQGFGG), and 186–199 (GGQG…GSRW).

It is found in the mitochondrion. This is an uncharacterized protein from Saccharomyces cerevisiae (strain ATCC 204508 / S288c) (Baker's yeast).